A 718-amino-acid chain; its full sequence is SANT and BTB domain regulator of class switch recombination (718 aa).

In terms of domain architecture, SANT spans 21–59 (DMILYPLIGIPQTINWETVARLVPGLTPKECVKRFDELK). The BTB domain occupies 147-255 (MVIHVCDEAK…QCIQYCHKNM (109 aa)). Positions 555–576 (SEEEEYTTGSEVTEDEVGDEEE) are enriched in acidic residues. Disordered stretches follow at residues 555–622 (SEEE…SPFV) and 690–718 (RASV…GRPA). Residues 580–595 (KQRKKEKPKKFTKPPK) show a composition bias toward basic residues. Residues 604–615 (QKKEKTLEKSTS) are compositionally biased toward basic and acidic residues.

This sequence belongs to the KIAA1841 family. Homodimer. Interacts (via the BTB domain) with HDAC1 and NCOR2.

Negatively regulates class switch recombination or isotype switching in splenic B-cells. This is SANT and BTB domain regulator of class switch recombination from Mus musculus (Mouse).